Consider the following 408-residue polypeptide: Lysosomal phospholipase A and acyltransferase (408 aa).

Residues 1–31 (MGLRRGPCPAALLPGGFLFLLLLADPALLAG) form the signal peptide. Residue Asp42 coordinates substrate. Cys61 and Cys85 are disulfide-bonded. Residue Asn95 is glycosylated (N-linked (GlcNAc...) asparagine). Ser194 serves as the catalytic Acyl-ester intermediate. A Zn(2+)-binding site is contributed by Ser194. Residue Met195 participates in substrate binding. N-linked (GlcNAc...) asparagine glycosylation is found at Asn269 and Asn285. Residues Asp336 and Cys351 each coordinate Zn(2+). Residues Asp356 and His388 each act as charge relay system in the active site. A Zn(2+)-binding site is contributed by His388. Asn394 carries an N-linked (GlcNAc...) asparagine glycan.

The protein belongs to the AB hydrolase superfamily. Lipase family. In terms of processing, N-glycosylated. N-glycosylation is important for maturation of the enzyme and normal subcellular location.

Its subcellular location is the secreted. It localises to the lysosome. The protein resides in the membrane. It catalyses the reaction a 1,2-diacyl-sn-glycero-3-phosphocholine + H2O = a 2-acyl-sn-glycero-3-phosphocholine + a fatty acid + H(+). The enzyme catalyses 1-hexadecanoyl-2-(9Z-octadecenoyl)-sn-glycero-3-phosphocholine + H2O = 2-(9Z-octadecenoyl)-sn-glycero-3-phosphocholine + hexadecanoate + H(+). It carries out the reaction 1,2-di-(9Z-octadecenoyl)-sn-glycero-3-phosphocholine + H2O = 2-(9Z-octadecenoyl)-sn-glycero-3-phosphocholine + (9Z)-octadecenoate + H(+). The catalysed reaction is 1-hexadecanoyl-2-glutaroyl-sn-glycero-3-phosphocholine + H2O = 2-glutaroyl-sn-glycero-3-phosphocholine + hexadecanoate + H(+). It catalyses the reaction 1-hexadecanoyl-2-nonadioyl-sn-glycero-3-phosphocholine + H2O = 2-nonadioyl-sn-glycero-3-phosphocholine + hexadecanoate + H(+). The enzyme catalyses 1-hexadecanoyl-2-(5-oxopentanoyl)-sn-glycero-3-phosphocholine + H2O = 2-(5-oxopentanoyl)-sn-glycero-3-phosphocholine + hexadecanoate + H(+). It carries out the reaction 1-hexadecanoyl-2-(9-oxononanoyl)-sn-glycero-3-phosphocholine + H2O = 2-(9-oxononanoyl)-sn-glycero-3-phosphocholine + hexadecanoate + H(+). The catalysed reaction is 1,2-dihexadecanoyl-sn-glycero-3-phosphocholine + H2O = 2-hexadecanoyl-sn-glycero-3-phosphocholine + hexadecanoate + H(+). It catalyses the reaction a 1,2-diacyl-sn-glycero-3-phosphocholine + H2O = a 1-acyl-sn-glycero-3-phosphocholine + a fatty acid + H(+). The enzyme catalyses 1-hexadecanoyl-2-(9Z-octadecenoyl)-sn-glycero-3-phosphocholine + H2O = 1-hexadecanoyl-sn-glycero-3-phosphocholine + (9Z)-octadecenoate + H(+). It carries out the reaction 1,2-di-(9Z-octadecenoyl)-sn-glycero-3-phosphocholine + H2O = 1-(9Z-octadecenoyl)-sn-glycero-3-phosphocholine + (9Z)-octadecenoate + H(+). The catalysed reaction is 1,2-dihexadecanoyl-sn-glycero-3-phosphocholine + H2O = 1-hexadecanoyl-sn-glycero-3-phosphocholine + hexadecanoate + H(+). It catalyses the reaction a 1-acyl-sn-glycero-3-phosphocholine + H2O = sn-glycerol 3-phosphocholine + a fatty acid + H(+). The enzyme catalyses 1-hexadecanoyl-sn-glycero-3-phosphocholine + H2O = sn-glycerol 3-phosphocholine + hexadecanoate + H(+). It carries out the reaction N-(acetyl)-sphing-4-enine + a 1,2-diacyl-sn-glycero-3-phosphoethanolamine = 1-O-acyl-N-(acetyl)-sphing-4-enine + a 2-acyl-sn-glycero-3-phosphoethanolamine. The catalysed reaction is 1-hexadecanoyl-2-(9Z-octadecenoyl)-sn-glycero-3-phosphoethanolamine + N-(acetyl)-sphing-4-enine = 2-(9Z-octadecenoyl)-sn-glycero-3-phosphoethanolamine + 1-hexadecanoyl-N-(acetyl)-sphing-4-enine. It catalyses the reaction 1-hexadecanoyl-2-(9Z,12Z-octadecadienoyl)-sn-glycero-3-phosphoethanolamine + N-(acetyl)-sphing-4-enine = 2-(9Z,12Z)-octadecadienoyl-sn-glycero-3-phosphoethanolamine + 1-hexadecanoyl-N-(acetyl)-sphing-4-enine. The enzyme catalyses 1-hexadecanoyl-2-(5Z,8Z,11Z,14Z-eicosatetraenoyl)-sn-glycero-3-phosphoethanolamine + N-(acetyl)-sphing-4-enine = 2-(5Z,8Z,11Z,14Z)-eicosatetraenoyl-sn-glycero-3-phosphoethanolamine + 1-hexadecanoyl-N-(acetyl)-sphing-4-enine. It carries out the reaction N-(acetyl)-sphing-4-enine + a 1,2-diacyl-sn-glycero-3-phosphoethanolamine = 1-O-acyl-N-(acetyl)-sphing-4-enine + a 1-acyl-sn-glycero-3-phosphoethanolamine. The catalysed reaction is 1-hexadecanoyl-2-(9Z-octadecenoyl)-sn-glycero-3-phosphoethanolamine + N-(acetyl)-sphing-4-enine = 1-(9Z-octadecenoyl)-N-(acetyl)-sphing-4-enine + 1-hexadecanoyl-sn-glycero-3-phosphoethanolamine. It catalyses the reaction 1-hexadecanoyl-2-(9Z,12Z-octadecadienoyl)-sn-glycero-3-phosphoethanolamine + N-(acetyl)-sphing-4-enine = 1-(9Z,12Z-octadecadienoyl)-N-acetylsphing-4-enine + 1-hexadecanoyl-sn-glycero-3-phosphoethanolamine. The enzyme catalyses 1-hexadecanoyl-2-(5Z,8Z,11Z,14Z-eicosatetraenoyl)-sn-glycero-3-phosphoethanolamine + N-(acetyl)-sphing-4-enine = 1-(5Z,8Z,11Z,14Z)-eicosatetraenoyl-N-(acetyl)-sphing-4-enine + 1-hexadecanoyl-sn-glycero-3-phosphoethanolamine. It carries out the reaction N-(acetyl)-sphing-4-enine + a 1,2-diacyl-sn-glycero-3-phosphocholine = 1-O-acyl-N-(acetyl)-sphing-4-enine + a 2-acyl-sn-glycero-3-phosphocholine. The catalysed reaction is 1-hexadecanoyl-2-(9Z-octadecenoyl)-sn-glycero-3-phosphocholine + N-(acetyl)-sphing-4-enine = 1-hexadecanoyl-N-(acetyl)-sphing-4-enine + 2-(9Z-octadecenoyl)-sn-glycero-3-phosphocholine. It catalyses the reaction 1-hexadecanoyl-2-(9Z,12Z-octadecadienoyl)-sn-glycero-3-phosphocholine + N-(acetyl)-sphing-4-enine = 2-(9Z,12Z-octadecadienoyl)-sn-glycero-3-phosphocholine + 1-hexadecanoyl-N-(acetyl)-sphing-4-enine. The enzyme catalyses 1-hexadecanoyl-2-(5Z,8Z,11Z,14Z-eicosatetraenoyl)-sn-glycero-3-phosphocholine + N-(acetyl)-sphing-4-enine = 1-hexadecanoyl-N-(acetyl)-sphing-4-enine + 2-(5Z,8Z,11Z,14Z)-eicosatetraenoyl-sn-glycero-3-phosphocholine. It carries out the reaction 1-hexadecanoyl-2-(4Z,7Z,10Z,13Z,16Z,19Z-docosahexaenoyl)-sn-glycero-3-phosphocholine + N-(acetyl)-sphing-4-enine = 2-(4Z,7Z,10Z,13Z,16Z,19Z-docosahexaenoyl)-sn-glycero-3-phosphocholine + 1-hexadecanoyl-N-(acetyl)-sphing-4-enine. The catalysed reaction is 1-hexadecanoyl-2-nonadioyl-sn-glycero-3-phosphocholine + N-(acetyl)-sphing-4-enine = 2-nonadioyl-sn-glycero-3-phosphocholine + 1-hexadecanoyl-N-(acetyl)-sphing-4-enine. It catalyses the reaction 1-octadecanoyl-2-(9Z-octadecenoyl)-sn-glycero-3-phosphocholine + N-(acetyl)-sphing-4-enine = 1-octadecanoyl-N-(acetyl)-sphing-4-enine + 2-(9Z-octadecenoyl)-sn-glycero-3-phosphocholine. The enzyme catalyses 1-(9Z)-octadecenoyl-2-octadecanoyl-sn-glycero-3-phosphocholine + N-(acetyl)-sphing-4-enine = 2-octadecanoyl-sn-glycero-3-phosphocholine + 1-(9Z-octadecenoyl)-N-(acetyl)-sphing-4-enine. It carries out the reaction 1-octadecanoyl-2-(5Z,8Z,11Z,14Z-eicosatetraenoyl)-sn-glycero-3-phosphocholine + N-(acetyl)-sphing-4-enine = 1-octadecanoyl-N-(acetyl)-sphing-4-enine + 2-(5Z,8Z,11Z,14Z)-eicosatetraenoyl-sn-glycero-3-phosphocholine. The catalysed reaction is 1-(9Z-octadecenoyl)-2-hexadecanoyl-sn-glycero-3-phosphocholine + N-(acetyl)-sphing-4-enine = 1-(9Z-octadecenoyl)-N-(acetyl)-sphing-4-enine + 2-hexadecanoyl-sn-glycero-3-phosphocholine. It catalyses the reaction N-(acetyl)-sphing-4-enine + a 1,2-diacyl-sn-glycero-3-phosphocholine = 1-O-acyl-N-(acetyl)-sphing-4-enine + a 1-acyl-sn-glycero-3-phosphocholine. The enzyme catalyses 1-hexadecanoyl-2-(9Z-octadecenoyl)-sn-glycero-3-phosphocholine + N-(acetyl)-sphing-4-enine = 1-(9Z-octadecenoyl)-N-(acetyl)-sphing-4-enine + 1-hexadecanoyl-sn-glycero-3-phosphocholine. It carries out the reaction 1-hexadecanoyl-2-(9Z,12Z-octadecadienoyl)-sn-glycero-3-phosphocholine + N-(acetyl)-sphing-4-enine = 1-(9Z,12Z-octadecadienoyl)-N-acetylsphing-4-enine + 1-hexadecanoyl-sn-glycero-3-phosphocholine. The catalysed reaction is 1-hexadecanoyl-2-(5Z,8Z,11Z,14Z-eicosatetraenoyl)-sn-glycero-3-phosphocholine + N-(acetyl)-sphing-4-enine = 1-(5Z,8Z,11Z,14Z)-eicosatetraenoyl-N-(acetyl)-sphing-4-enine + 1-hexadecanoyl-sn-glycero-3-phosphocholine. It catalyses the reaction 1-hexadecanoyl-2-(4Z,7Z,10Z,13Z,16Z,19Z-docosahexaenoyl)-sn-glycero-3-phosphocholine + N-(acetyl)-sphing-4-enine = 1-(4Z,7Z,10Z,13Z,16Z,19Z-docosahexaenoyl)-N-(acetyl)-sphing-4-enine + 1-hexadecanoyl-sn-glycero-3-phosphocholine. The enzyme catalyses 1-octadecanoyl-2-(9Z-octadecenoyl)-sn-glycero-3-phosphocholine + N-(acetyl)-sphing-4-enine = 1-(9Z-octadecenoyl)-N-(acetyl)-sphing-4-enine + 1-octadecanoyl-sn-glycero-3-phosphocholine. It carries out the reaction 1-octadecanoyl-2-(9Z,12Z)-octadecadienoyl-sn-glycero-3-phosphocholine + N-(acetyl)-sphing-4-enine = 1-(9Z,12Z-octadecadienoyl)-N-acetylsphing-4-enine + 1-octadecanoyl-sn-glycero-3-phosphocholine. The catalysed reaction is 1-(9Z-octadecenoyl)-2-hexadecanoyl-sn-glycero-3-phosphocholine + N-(acetyl)-sphing-4-enine = 1-hexadecanoyl-N-(acetyl)-sphing-4-enine + 1-(9Z-octadecenoyl)-sn-glycero-3-phosphocholine. It catalyses the reaction 1-(9Z)-octadecenoyl-2-octadecanoyl-sn-glycero-3-phosphocholine + N-(acetyl)-sphing-4-enine = 1-octadecanoyl-N-(acetyl)-sphing-4-enine + 1-(9Z-octadecenoyl)-sn-glycero-3-phosphocholine. The enzyme catalyses 1,2-di-(9Z-octadecenoyl)-sn-glycero-3-phosphocholine + N-(acetyl)-sphing-4-enine = 1-(9Z-octadecenoyl)-N-(acetyl)-sphing-4-enine + 1-(9Z-octadecenoyl)-sn-glycero-3-phosphocholine. It carries out the reaction 1-octadecanoyl-2-(5Z,8Z,11Z,14Z-eicosatetraenoyl)-sn-glycero-3-phosphocholine + N-(acetyl)-sphing-4-enine = 1-(5Z,8Z,11Z,14Z)-eicosatetraenoyl-N-(acetyl)-sphing-4-enine + 1-octadecanoyl-sn-glycero-3-phosphocholine. The catalysed reaction is a 1,2-diacyl-sn-glycero-3-phospho-L-serine + N-(acetyl)-sphing-4-enine = a 2-acyl-sn-glycero-3-phospho-L-serine + 1-O-acyl-N-(acetyl)-sphing-4-enine. It catalyses the reaction 1-octadecanoyl-2-(9Z-octadecenoyl)-sn-glycero-3-phospho-L-serine + N-(acetyl)-sphing-4-enine = 2-(9Z-octadecenoyl)-sn-glycero-3-phospho-L-serine + 1-octadecanoyl-N-(acetyl)-sphing-4-enine. The enzyme catalyses a 1,2-diacyl-sn-glycero-3-phospho-L-serine + N-(acetyl)-sphing-4-enine = 1-O-acyl-N-(acetyl)-sphing-4-enine + a 1-acyl-sn-glycero-3-phospho-L-serine. It carries out the reaction 1-octadecanoyl-2-(9Z-octadecenoyl)-sn-glycero-3-phospho-L-serine + N-(acetyl)-sphing-4-enine = 1-octadecanoyl-sn-glycero-3-phosphoserine + 1-(9Z-octadecenoyl)-N-(acetyl)-sphing-4-enine. The catalysed reaction is a 1,2-diacyl-sn-glycero-3-phospho-(1'-sn-glycerol) + N-(acetyl)-sphing-4-enine = 2-acyl-sn-glycero-3-phospho-(1'-sn-glycerol) + 1-O-acyl-N-(acetyl)-sphing-4-enine. It catalyses the reaction 1-octadecanoyl-2-(9Z-octadecenoyl)-sn-glycero-3-phospho-(1'-sn-glycerol) + N-(acetyl)-sphing-4-enine = 2-(9Z-octadecenoyl)-sn-glycero-3-phospho-(1'-sn-glycerol) + 1-octadecanoyl-N-(acetyl)-sphing-4-enine. The enzyme catalyses a 1,2-diacyl-sn-glycero-3-phospho-(1'-sn-glycerol) + N-(acetyl)-sphing-4-enine = 1-O-acyl-N-(acetyl)-sphing-4-enine + 1-acyl-sn-glycero-3-phospho-(1'-sn-glycerol). It carries out the reaction 1-octadecanoyl-2-(9Z-octadecenoyl)-sn-glycero-3-phospho-(1'-sn-glycerol) + N-(acetyl)-sphing-4-enine = 1-octadecanoyl-sn-glycero-3-phospho-(1'-sn-glycerol) + 1-(9Z-octadecenoyl)-N-(acetyl)-sphing-4-enine. The catalysed reaction is an N-acylethanolamine + a 1,2-diacyl-sn-glycero-3-phosphocholine = 2-(acylamino)ethyl fatty acid + a 2-acyl-sn-glycero-3-phosphocholine. It catalyses the reaction an N-acylethanolamine + a 1,2-diacyl-sn-glycero-3-phosphocholine = 2-(acylamino)ethyl fatty acid + a 1-acyl-sn-glycero-3-phosphocholine. The enzyme catalyses N-(5Z,8Z,11Z,14Z-eicosatetraenoyl)-ethanolamine + 1,2-di-(9Z-octadecenoyl)-sn-glycero-3-phosphocholine = 2-[(5Z,8Z,11Z,14Z)-eicosatetraenoylamino]ethyl (9Z)-octadecenoate + (9Z-octadecenoyl)-sn-glycero-3-phosphocholine. It carries out the reaction N-(9Z-octadecenoyl) ethanolamine + 1,2-di-(9Z-octadecenoyl)-sn-glycero-3-phosphocholine = 2-[(9Z)-octadecenoylamino]ethyl (9Z)-octadecenoate + (9Z-octadecenoyl)-sn-glycero-3-phosphocholine. The catalysed reaction is a 3-acyl-sn-glycerol + a 1,2-diacyl-sn-glycero-3-phosphocholine = a 1,3-diacylglycerol + a 1-acyl-sn-glycero-3-phosphocholine. It catalyses the reaction a 3-acyl-sn-glycerol + a 1,2-diacyl-sn-glycero-3-phosphocholine = a 1,3-diacylglycerol + a 2-acyl-sn-glycero-3-phosphocholine. The enzyme catalyses 3-(9Z-octadecenoyl)-sn-glycerol + 1,2-di-(9Z-octadecenoyl)-sn-glycero-3-phosphocholine = 1,3-di-(9Z-octadecenoyl)-glycerol + (9Z-octadecenoyl)-sn-glycero-3-phosphocholine. It carries out the reaction 3-hexadecanoyl-sn-glycerol + 1,2-di-(9Z-octadecenoyl)-sn-glycero-3-phosphocholine = 1-(9Z)-octadecenoyl-3-hexadecanoyl-sn-glycerol + (9Z-octadecenoyl)-sn-glycero-3-phosphocholine. The catalysed reaction is a 1-acyl-sn-glycerol + a 1,2-diacyl-sn-glycero-3-phosphocholine = a 1,3-diacylglycerol + a 2-acyl-sn-glycero-3-phosphocholine. It catalyses the reaction a 1-acyl-sn-glycerol + a 1,2-diacyl-sn-glycero-3-phosphocholine = a 1,3-diacylglycerol + a 1-acyl-sn-glycero-3-phosphocholine. The enzyme catalyses 1-(9Z-octadecenoyl)-sn-glycerol + 1,2-di-(9Z-octadecenoyl)-sn-glycero-3-phosphocholine = 1,3-di-(9Z-octadecenoyl)-glycerol + (9Z-octadecenoyl)-sn-glycero-3-phosphocholine. It carries out the reaction 1-hexadecanoyl-sn-glycerol + 1,2-di-(9Z-octadecenoyl)-sn-glycero-3-phosphocholine = 1-hexadecanoyl-3-(9Z)-octadecenoyl-sn-glycerol + (9Z-octadecenoyl)-sn-glycero-3-phosphocholine. The catalysed reaction is a 2-acylglycerol + a 1,2-diacyl-sn-glycero-3-phosphocholine = a 1,2-diacylglycerol + a 2-acyl-sn-glycero-3-phosphocholine. It catalyses the reaction a 2-acylglycerol + a 1,2-diacyl-sn-glycero-3-phosphocholine = a 1,2-diacylglycerol + a 1-acyl-sn-glycero-3-phosphocholine. The enzyme catalyses 2-hexadecanoylglycerol + 1,2-di-(9Z-octadecenoyl)-sn-glycero-3-phosphocholine = 1-(9Z)-octadecenoyl-2-hexadecanoylglycerol + (9Z-octadecenoyl)-sn-glycero-3-phosphocholine. It carries out the reaction 1-O-alkylglycerol + a 1,2-diacyl-sn-glycero-3-phosphocholine = 1-O-alkyl-3-acylglycerol + a 1-acyl-sn-glycero-3-phosphocholine. The catalysed reaction is 1-O-alkylglycerol + a 1,2-diacyl-sn-glycero-3-phosphocholine = 1-O-alkyl-3-acylglycerol + a 2-acyl-sn-glycero-3-phosphocholine. It catalyses the reaction 1-O-hexadecylglycerol + 1,2-di-(9Z-octadecenoyl)-sn-glycero-3-phosphocholine = 1-O-hexadecyl-3-(9Z)-octadecenoylglycerol + (9Z-octadecenoyl)-sn-glycero-3-phosphocholine. The enzyme catalyses 1-O-alkyl-2-acyl-sn-glycerol + a 1,2-diacyl-sn-glycero-3-phosphocholine = 1-O-alkyl-2,3-diacyl-sn-glycerol + a 2-acyl-sn-glycero-3-phosphocholine. It carries out the reaction 1-O-alkyl-2-acyl-sn-glycerol + a 1,2-diacyl-sn-glycero-3-phosphocholine = 1-O-alkyl-2,3-diacyl-sn-glycerol + a 1-acyl-sn-glycero-3-phosphocholine. The catalysed reaction is 1-O-hexadecyl-2-acetyl-sn-glycerol + 1,2-di-(9Z-octadecenoyl)-sn-glycero-3-phosphocholine = 1-O-hexadecyl-2-acetyl-3-(9Z)-octadecenoyl-sn-glycerol + (9Z-octadecenoyl)-sn-glycero-3-phosphocholine. It catalyses the reaction 1-O-hexadecyl-2-O-methyl-sn-glycerol + 1,2-di-(9Z-octadecenoyl)-sn-glycero-3-phosphocholine = 1-O-hexadecyl-2-O-methyl-3-(9Z)-octadecenoyl-sn-glycerol + (9Z-octadecenoyl)-sn-glycero-3-phosphocholine. The enzyme catalyses a 1,2-diacyl-sn-glycero-3-phosphoethanolamine + H2O = a 1-acyl-sn-glycero-3-phosphoethanolamine + a fatty acid + H(+). It carries out the reaction 1-acyl-2-(5Z,8Z,11Z,14Z)-eicosatetraenoyl-sn-glycero-3-phosphoethanolamine + H2O = a 1-acyl-sn-glycero-3-phosphoethanolamine + (5Z,8Z,11Z,14Z)-eicosatetraenoate + H(+). The catalysed reaction is a 1,2-diacyl-sn-glycero-3-phospho-(1'-sn-glycerol) + H2O = 1-acyl-sn-glycero-3-phospho-(1'-sn-glycerol) + a fatty acid + H(+). It catalyses the reaction 1-hexadecanoyl-2-(9Z-octadecenoyl)-sn-glycero-3-phospho-(1'-sn-glycerol) + H2O = 1-hexadecanoyl-sn-glycero-3-phospho-(1'-sn-glycerol) + (9Z)-octadecenoate + H(+). The enzyme catalyses a 1,2-diacyl-sn-glycero-3-phospho-(1'-sn-glycerol) + H2O = 2-acyl-sn-glycero-3-phospho-(1'-sn-glycerol) + a fatty acid + H(+). It carries out the reaction 1-hexadecanoyl-2-(9Z-octadecenoyl)-sn-glycero-3-phospho-(1'-sn-glycerol) + H2O = 2-(9Z-octadecenoyl)-sn-glycero-3-phospho-(1'-sn-glycerol) + hexadecanoate + H(+). Functionally, has dual calcium-independent phospholipase and O-acyltransferase activities with a potential role in glycerophospholipid homeostasis and remodeling of acyl groups of lipophilic alcohols present in acidic cellular compartments. Catalyzes hydrolysis of the ester bond of the fatty acyl group attached at sn-1 or sn-2 position of phospholipids (phospholipase A1 or A2 activity) and transfer it to the hydroxyl group at the first carbon of lipophilic alcohols (O-acyltransferase activity). Among preferred fatty acyl donors are phosphatidylcholines, phosphatidylethanolamines, phosphatidylglycerols and phosphatidylserines. Favors sn-2 over sn-1 deacylation of unsaturated fatty acyl groups of phosphatidylcholines, phosphatidylethanolamines, and phosphatidylglycerols. Among preferred fatty acyl acceptors are natural lipophilic alcohols including short-chain ceramide N-acetyl-sphingosine (C2 ceramide), alkylacylglycerols, monoacylglycerols, and acylethanolamides such as anandamide and oleoylethanolamide. Selectively hydrolyzes the sn-1 fatty acyl group of truncated oxidized phospholipids and may play a role in detoxification of reactive oxidized phospholipids during oxidative stress. Required for normal phospholipid degradation in alveolar macrophages with potential implications in the clearance of pulmonary surfactant, which is mainly composed of dipalmitoylphosphatidylcholine (1,2-dihexadecanoyl-sn-glycero-3-phosphocholine). Involved in the first step of bis(monoacylglycero)phosphate (BMP) de novo synthesis from phosphatidylglycerol (1,2-diacyl-sn-glycero-3-phospho-(1'-sn-glycerol), PG). BMP is an important player in cargo sorting and degradation, regulation of cellular cholesterol levels and intercellular communication. At neutral pH, hydrolyzes the sn-1 fatty acyl group of the lysophosphatidylcholines. The polypeptide is Lysosomal phospholipase A and acyltransferase (PLA2G15) (Canis lupus familiaris (Dog)).